Reading from the N-terminus, the 132-residue chain is Protein NrdI (132 aa).

This sequence belongs to the NrdI family.

In terms of biological role, probably involved in ribonucleotide reductase function. The protein is Protein NrdI of Bartonella quintana (strain Toulouse) (Rochalimaea quintana).